Consider the following 227-residue polypeptide: Potassium/proton antiporter CemA (227 aa).

Helical transmembrane passes span 5-25 (SISL…SFTF), 112-132 (IICF…LILI), 143-163 (LSDT…IGFH), and 187-207 (IISG…KYWI).

This sequence belongs to the CemA family.

It localises to the plastid. The protein resides in the chloroplast inner membrane. The enzyme catalyses K(+)(in) + H(+)(out) = K(+)(out) + H(+)(in). Its function is as follows. Contributes to K(+)/H(+) antiport activity by supporting proton efflux to control proton extrusion and homeostasis in chloroplasts in a light-dependent manner to modulate photosynthesis. Prevents excessive induction of non-photochemical quenching (NPQ) under continuous-light conditions. Indirectly promotes efficient inorganic carbon uptake into chloroplasts. This is Potassium/proton antiporter CemA from Phaseolus vulgaris (Kidney bean).